The chain runs to 398 residues: MAKEKYDRSKPHVNIGTIGHVDHGKTTLTAAITTVLARRLPSAVNQPKDYSSIDAAPEERERGITINTAHVEYETEKRHYAHIDAPGHADYVKNMITGAAQMDGAILVVASTDGPMPQTREHILLSRQVGVKYLIVFMNKVDLVDDEELLELVEMEIRDLLSEYDFPGDDIPVIQGSALKALEGDTAQEDIIMELMHTVDDYIPDPERDTDKPLLLPVEDVFSITGRGTVASGRIDRGTVKVNDEVEIVGIRDDIQKAVVTGVEMFRKQLDEGIAGDNVGVLLRGIQRDEIERGQVLAKPGSIHPHTKFKGEVYILTKEEGGRHTPFFNNYRPQFYFRTTDVTGSIELPAGTEMVMPGDNVTIDVELIHPIAVEQGTTFSIREGGRTVGSGIVSEIEA.

Residues 10–207 enclose the tr-type G domain; it reads KPHVNIGTIG…TVDDYIPDPE (198 aa). Residues 19-26 form a G1 region; it reads GHVDHGKT. 19 to 26 is a binding site for GTP; the sequence is GHVDHGKT. Thr26 lines the Mg(2+) pocket. A G2 region spans residues 63–67; sequence GITIN. The G3 stretch occupies residues 84-87; the sequence is DAPG. GTP is bound by residues 84-88 and 139-142; these read DAPGH and NKVD. A G4 region spans residues 139–142; the sequence is NKVD. The segment at 177–179 is G5; sequence SAL.

The protein belongs to the TRAFAC class translation factor GTPase superfamily. Classic translation factor GTPase family. EF-Tu/EF-1A subfamily. As to quaternary structure, monomer.

It localises to the cytoplasm. It catalyses the reaction GTP + H2O = GDP + phosphate + H(+). Functionally, GTP hydrolase that promotes the GTP-dependent binding of aminoacyl-tRNA to the A-site of ribosomes during protein biosynthesis. The chain is Elongation factor Tu from Streptococcus mutans serotype c (strain ATCC 700610 / UA159).